The sequence spans 469 residues: Glutamate--tRNA ligase (469 aa).

A 'HIGH' region motif is present at residues proline 11–asparagine 21. The span at glutamine 114 to proline 131 shows a compositional bias: basic and acidic residues. The interval glutamine 114–proline 139 is disordered. The 'KMSKS' region signature appears at lysine 243–arginine 247. Lysine 246 is an ATP binding site.

This sequence belongs to the class-I aminoacyl-tRNA synthetase family. Glutamate--tRNA ligase type 1 subfamily. In terms of assembly, monomer.

It is found in the cytoplasm. The catalysed reaction is tRNA(Glu) + L-glutamate + ATP = L-glutamyl-tRNA(Glu) + AMP + diphosphate. Catalyzes the attachment of glutamate to tRNA(Glu) in a two-step reaction: glutamate is first activated by ATP to form Glu-AMP and then transferred to the acceptor end of tRNA(Glu). This Paraburkholderia xenovorans (strain LB400) protein is Glutamate--tRNA ligase.